The primary structure comprises 179 residues: Large ribosomal subunit protein uL5 (179 aa).

Belongs to the universal ribosomal protein uL5 family. As to quaternary structure, part of the 50S ribosomal subunit; part of the 5S rRNA/L5/L18/L25 subcomplex. Contacts the 5S rRNA and the P site tRNA. Forms a bridge to the 30S subunit in the 70S ribosome.

In terms of biological role, this is one of the proteins that bind and probably mediate the attachment of the 5S RNA into the large ribosomal subunit, where it forms part of the central protuberance. In the 70S ribosome it contacts protein S13 of the 30S subunit (bridge B1b), connecting the 2 subunits; this bridge is implicated in subunit movement. Contacts the P site tRNA; the 5S rRNA and some of its associated proteins might help stabilize positioning of ribosome-bound tRNAs. The protein is Large ribosomal subunit protein uL5 of Francisella tularensis subsp. novicida (strain U112).